A 187-amino-acid polypeptide reads, in one-letter code: Ribose 1,5-bisphosphate phosphokinase PhnN (187 aa).

Position 9 to 16 (9 to 16 (GPSGSGKD)) interacts with ATP.

This sequence belongs to the ribose 1,5-bisphosphokinase family.

It carries out the reaction alpha-D-ribose 1,5-bisphosphate + ATP = 5-phospho-alpha-D-ribose 1-diphosphate + ADP. It functions in the pathway metabolic intermediate biosynthesis; 5-phospho-alpha-D-ribose 1-diphosphate biosynthesis; 5-phospho-alpha-D-ribose 1-diphosphate from D-ribose 5-phosphate (route II): step 3/3. Its function is as follows. Catalyzes the phosphorylation of ribose 1,5-bisphosphate to 5-phospho-D-ribosyl alpha-1-diphosphate (PRPP). The chain is Ribose 1,5-bisphosphate phosphokinase PhnN from Desulfomicrobium baculatum (strain DSM 4028 / VKM B-1378 / X) (Desulfovibrio baculatus).